Reading from the N-terminus, the 215-residue chain is uncharacterized protein (215 aa).

S-adenosyl-L-methionine is bound by residues Gly-53, Glu-74, and Asp-97.

The protein belongs to the methyltransferase superfamily. YrrT family.

Functionally, could be a S-adenosyl-L-methionine-dependent methyltransferase. This is an uncharacterized protein from Geobacillus kaustophilus (strain HTA426).